The primary structure comprises 892 residues: Putative disease resistance protein At4g10780 (892 aa).

Residues 24–63 are a coiled coil; that stretch reads SLGNYIHKLKDNIVALEKAIEDLTATRDDVLRRVQMEEGK. Positions 137–440 constitute an NB-ARC domain; sequence IVAAPAPKLE…ICEGFIDGNI (304 aa). 180–187 is an ATP binding site; sequence GMGGVGKT. LRR repeat units follow at residues 515 to 536, 537 to 559, 562 to 584, 586 to 608, 609 to 631, and 632 to 654; these read AVRR…PECP, ELTT…FFRH, KLVV…ISEL, ALRY…QDLK, TLIH…SKLS, and SLRT…KELH.

It belongs to the disease resistance NB-LRR family.

Potential disease resistance protein. The chain is Putative disease resistance protein At4g10780 from Arabidopsis thaliana (Mouse-ear cress).